The sequence spans 412 residues: D-xylonate dehydratase (412 aa).

As to quaternary structure, homooctamer.

The catalysed reaction is D-xylonate = 2-dehydro-3-deoxy-D-arabinonate + H2O. Its function is as follows. NADP-dependent D-xylose dehydrogenase involved in the degradation of D-xylose, a major component of hemicelluloses such as xylan. Catalyzes the third reaction in the xylose utilization pathway through dehydratation of D-xylonate into 2-dehydro-3-deoxy-D-xylonate. The chain is D-xylonate dehydratase from Haloferax volcanii (strain ATCC 29605 / DSM 3757 / JCM 8879 / NBRC 14742 / NCIMB 2012 / VKM B-1768 / DS2) (Halobacterium volcanii).